Consider the following 126-residue polypeptide: Ribonuclease P protein component (126 aa).

Belongs to the RnpA family. Consists of a catalytic RNA component (M1 or rnpB) and a protein subunit.

It carries out the reaction Endonucleolytic cleavage of RNA, removing 5'-extranucleotides from tRNA precursor.. RNaseP catalyzes the removal of the 5'-leader sequence from pre-tRNA to produce the mature 5'-terminus. It can also cleave other RNA substrates such as 4.5S RNA. The protein component plays an auxiliary but essential role in vivo by binding to the 5'-leader sequence and broadening the substrate specificity of the ribozyme. In Rhodococcus erythropolis (strain PR4 / NBRC 100887), this protein is Ribonuclease P protein component.